Reading from the N-terminus, the 236-residue chain is SERTA domain-containing protein 1 (236 aa).

One can recognise an SERTA domain in the interval 38-85 (PTVASSSLFDLSVVKLHHSLRQSEPDLRHLVLVVNTLRRIQASMEPAP). The disordered stretch occupies residues 190–211 (ASEGLKPGPENGPAKEEPPELD).

As to quaternary structure, interacts with the PHD-bromodomain of TIF1, TRIM28/TIF1B and p300/CBP. Interacts with E2F1 and TFDP1; modulates transactivation activity of TFDP1/E2F complexes. Also interacts with CDK4. Post-translationally, polyubiquitinated, which promotes proteasomal degradation. As to expression, detected at in testis, lung and, at lower levels, in muscle, liver, spleen, brain and heart.

Its function is as follows. Acts at E2F-responsive promoters as coregulator to integrate signals provided by PHD- and/or bromodomain-containing transcription factors. Stimulates E2F1/TFDP1 transcriptional activity. Renders the activity of cyclin D1/CDK4 resistant to the inhibitory effects of CDKN2A/p16INK4A. The sequence is that of SERTA domain-containing protein 1 (Sertad1) from Mus musculus (Mouse).